Reading from the N-terminus, the 244-residue chain is Chlorosome protein I (244 aa).

Residues 1–95 (MNLIINDKTA…TVKVLSRPEE (95 aa)) enclose the 2Fe-2S ferredoxin-type domain. Cys33, Cys39, Cys42, and Cys77 together coordinate [2Fe-2S] cluster.

The cofactor is [2Fe-2S] cluster.

Its subcellular location is the chlorosome. In terms of biological role, could play a direct role in the oxidation or reduction of the quenching species formed in the chlorosome. This chain is Chlorosome protein I (csmI), found in Chlorobaculum tepidum (strain ATCC 49652 / DSM 12025 / NBRC 103806 / TLS) (Chlorobium tepidum).